Reading from the N-terminus, the 426-residue chain is Enolase (426 aa).

Gln163 is a (2R)-2-phosphoglycerate binding site. The active-site Proton donor is the Glu205. Asp242, Glu286, and Asp313 together coordinate Mg(2+). Positions 338, 367, 368, and 389 each coordinate (2R)-2-phosphoglycerate. Lys338 acts as the Proton acceptor in catalysis.

This sequence belongs to the enolase family. The cofactor is Mg(2+).

The protein resides in the cytoplasm. It is found in the secreted. The protein localises to the cell surface. The enzyme catalyses (2R)-2-phosphoglycerate = phosphoenolpyruvate + H2O. Its pathway is carbohydrate degradation; glycolysis; pyruvate from D-glyceraldehyde 3-phosphate: step 4/5. Catalyzes the reversible conversion of 2-phosphoglycerate (2-PG) into phosphoenolpyruvate (PEP). It is essential for the degradation of carbohydrates via glycolysis. The polypeptide is Enolase (Helicobacter pylori (strain P12)).